Here is a 205-residue protein sequence, read N- to C-terminus: MSVNNEVSADQHNPELEDDTFEHGPPVSLGEKKSLNEYMKMDAEDESLQKWKASLGITGTGYSPSNDRRTVVILKLSLLVDGRDPVDVNMEDAASVEQIRKKGFTIKEGSEFKIGVKFRVQHEVISGLRYVQTVRRRGFVVDKTSTMIGSYGPSETPYDFTSEPDEAPTGMLARGHYEANGKFVDDDKVVHHEFVWAFDVAKSWK.

The span at 1 to 11 (MSVNNEVSADQ) shows a compositional bias: polar residues. The tract at residues 1-31 (MSVNNEVSADQHNPELEDDTFEHGPPVSLGE) is disordered. Residue S63 is modified to Phosphoserine.

This sequence belongs to the Rho GDI family.

Its subcellular location is the cytoplasm. It localises to the nucleus. Functionally, regulates the GDP/GTP exchange reaction of the Rho proteins by inhibiting the dissociation of GDP from them, and the subsequent binding of GTP to them. In Schizosaccharomyces pombe (strain 972 / ATCC 24843) (Fission yeast), this protein is Rho GDP-dissociation inhibitor.